The primary structure comprises 166 residues: Interleukin-3 (166 aa).

The signal sequence occupies residues 1 to 27 (MVLASSTTSILCMLLPLLMLFHQGLQI). Intrachain disulfides connect Cys43–Cys106 and Cys105–Cys166. N-linked (GlcNAc...) asparagine glycans are attached at residues Asn60 and Asn70. Positions 145-166 (SVSRPPQPTSSSDNFRPMTVEC) are disordered.

This sequence belongs to the IL-3 family. Monomer. In terms of tissue distribution, activated T-cells, mast cells, natural killer cells.

The protein resides in the secreted. Functionally, cytokine secreted predominantly by activated T-lymphocytes as well as mast cells and osteoblastic cells that controls the production and differentiation of hematopoietic progenitor cells into lineage-restricted cells. Also stimulates mature basophils, eosinophils, and monocytes to become functionally activated. In addition, plays an important role in neural cell proliferation and survival. Participates as well in bone homeostasis and inhibits osteoclast differentiation by preventing NF-kappa-B nuclear translocation and activation. Mechanistically, exerts its biological effects through a receptor composed of IL3RA subunit and a signal transducing subunit IL3RB. Receptor stimulation results in the rapid activation of JAK2 kinase activity leading to STAT5-mediated transcriptional program. Alternatively, contributes to cell survival under oxidative stress in non-hematopoietic systems by activating pathways mediated by PI3K/AKT and ERK. This Rattus norvegicus (Rat) protein is Interleukin-3 (Il3).